The sequence spans 257 residues: Imidazole glycerol phosphate synthase subunit HisF (257 aa).

Residues Asp11 and Asp130 contribute to the active site.

The protein belongs to the HisA/HisF family. Heterodimer of HisH and HisF.

Its subcellular location is the cytoplasm. The catalysed reaction is 5-[(5-phospho-1-deoxy-D-ribulos-1-ylimino)methylamino]-1-(5-phospho-beta-D-ribosyl)imidazole-4-carboxamide + L-glutamine = D-erythro-1-(imidazol-4-yl)glycerol 3-phosphate + 5-amino-1-(5-phospho-beta-D-ribosyl)imidazole-4-carboxamide + L-glutamate + H(+). It participates in amino-acid biosynthesis; L-histidine biosynthesis; L-histidine from 5-phospho-alpha-D-ribose 1-diphosphate: step 5/9. IGPS catalyzes the conversion of PRFAR and glutamine to IGP, AICAR and glutamate. The HisF subunit catalyzes the cyclization activity that produces IGP and AICAR from PRFAR using the ammonia provided by the HisH subunit. The polypeptide is Imidazole glycerol phosphate synthase subunit HisF (Shewanella sp. (strain MR-7)).